The sequence spans 423 residues: Large ribosomal subunit protein mL37 (423 aa).

Residues 1-29 constitute a mitochondrion transit peptide; sequence MALASGPALRALAGSGRLGLGGYGTPKRG.

It belongs to the mitochondrion-specific ribosomal protein mL37 family. Component of the mitochondrial ribosome large subunit (39S) which comprises a 16S rRNA and about 50 distinct proteins.

The protein localises to the mitochondrion. The protein is Large ribosomal subunit protein mL37 (Mrpl37) of Mus musculus (Mouse).